A 345-amino-acid chain; its full sequence is S-adenosylmethionine:tRNA ribosyltransferase-isomerase (345 aa).

It belongs to the QueA family. As to quaternary structure, monomer.

The protein localises to the cytoplasm. It catalyses the reaction 7-aminomethyl-7-carbaguanosine(34) in tRNA + S-adenosyl-L-methionine = epoxyqueuosine(34) in tRNA + adenine + L-methionine + 2 H(+). It participates in tRNA modification; tRNA-queuosine biosynthesis. In terms of biological role, transfers and isomerizes the ribose moiety from AdoMet to the 7-aminomethyl group of 7-deazaguanine (preQ1-tRNA) to give epoxyqueuosine (oQ-tRNA). The polypeptide is S-adenosylmethionine:tRNA ribosyltransferase-isomerase (Alkalilimnicola ehrlichii (strain ATCC BAA-1101 / DSM 17681 / MLHE-1)).